A 478-amino-acid polypeptide reads, in one-letter code: Endoplasmic reticulum oxidoreductin-1 (478 aa).

Residues 1 to 20 form the signal peptide; the sequence is MREPLLQLIVLSLIIIVVNT. Cystine bridges form between Cys-28–Cys-41, Cys-30–Cys-39, Cys-79–Cys-384, Cys-88–Cys-93, Cys-209–Cys-230, and Cys-387–Cys-390. A disordered region spans residues 117–143; it reads AAVKEEEDDDAEKCADAGNNIDPMDRT. FAD is bound by residues Arg-188, Thr-190, and Trp-201. The FAD site is built by Ser-241, His-244, Arg-283, and Arg-295. Residue Asn-377 is glycosylated (N-linked (GlcNAc...) asparagine). The tract at residues 459–478 is disordered; the sequence is ESVMNTAADGPPRKSNKIDL.

It belongs to the EROs family. As to quaternary structure, may function both as a monomer and a homodimer. The cofactor is FAD.

It is found in the endoplasmic reticulum membrane. In terms of biological role, oxidoreductase involved in disulfide bond formation in the endoplasmic reticulum. Efficiently reoxidizes pdi-1, the enzyme catalyzing protein disulfide formation, in order to allow pdi-1 to sustain additional rounds of disulfide formation. Following pdi reoxidation, passes its electrons to molecular oxygen via FAD, leading to the production of reactive oxygen species (ROS) in the cell. This Caenorhabditis elegans protein is Endoplasmic reticulum oxidoreductin-1 (ero-1).